The chain runs to 580 residues: PX domain-containing protein kinase-like protein (580 aa).

The PX domain maps to 14 to 126 (LDDTVPLTAA…KFLDPNNYSA (113 aa)). One can recognise a Protein kinase domain in the interval 88–481 (FIAERQKGLQ…VENSEEQPVK (394 aa)). Residues 433–551 (EQKQIHQHRR…LPQAVNGVNR (119 aa)) form a disordered region. 2 stretches are compositionally biased toward basic residues: residues 437 to 448 (IHQHRRLTRAQS) and 457 to 469 (KRRK…KSKR). Low complexity predominate over residues 483–514 (SNANNSAGSGASSPLTSPSSPTPPSTAGLSSA). Residues 515–531 (LPPPPPPPPPPPPPAGP) are compositionally biased toward pro residues. One can recognise a WH2 domain in the interval 549 to 568 (VNRGALLSSIQNFQKGTLRK).

The protein belongs to the protein kinase superfamily.

The protein localises to the cytoplasm. It localises to the cell membrane. In terms of biological role, binds to and modulates brain Na,K-ATPase subunits ATP1B1 and ATP1B3 and may thereby participate in the regulation of electrical excitability and synaptic transmission. May not display kinase activity. This Rattus norvegicus (Rat) protein is PX domain-containing protein kinase-like protein.